The sequence spans 359 residues: 3-dehydroquinate synthase (359 aa).

Residues 70 to 75, 105 to 109, 129 to 130, Lys142, Lys151, and 169 to 172 contribute to the NAD(+) site; these read DGEQYK, GVIGD, TT, and FYKT. The Zn(2+) site is built by Glu184, His247, and His264.

The protein belongs to the sugar phosphate cyclases superfamily. Dehydroquinate synthase family. The cofactor is Co(2+). It depends on Zn(2+) as a cofactor. NAD(+) serves as cofactor.

It is found in the cytoplasm. It catalyses the reaction 7-phospho-2-dehydro-3-deoxy-D-arabino-heptonate = 3-dehydroquinate + phosphate. It participates in metabolic intermediate biosynthesis; chorismate biosynthesis; chorismate from D-erythrose 4-phosphate and phosphoenolpyruvate: step 2/7. Functionally, catalyzes the conversion of 3-deoxy-D-arabino-heptulosonate 7-phosphate (DAHP) to dehydroquinate (DHQ). The chain is 3-dehydroquinate synthase from Francisella tularensis subsp. tularensis (strain FSC 198).